Consider the following 257-residue polypeptide: MKRILLTNDDGYESKGLIKLAKMLKKHFKAEITIVAPANEKSACSHSITLTKPLRFQKVKKRFYKLEDGTPADCVYLALHALYKNHLPDLIISGINKGANVGEDITYSGTCAGAMEAVLHGIPAIALSQFYQDDQKELNFKLALNITKKIVKKVFKKGFPLDKKEFLNINFPSSKTNFKGIKICKAGKRIYSYEAHSNINPRGIEYYWLAAANLDHEDEKKSDITLLKQGYATITPIMLNLTAYKQMKNLKKWMKNG.

A divalent metal cation contacts are provided by Asp9, Asp10, Ser42, and Asn96.

It belongs to the SurE nucleotidase family. The cofactor is a divalent metal cation.

Its subcellular location is the cytoplasm. It catalyses the reaction a ribonucleoside 5'-phosphate + H2O = a ribonucleoside + phosphate. Functionally, nucleotidase that shows phosphatase activity on nucleoside 5'-monophosphates. The sequence is that of 5'-nucleotidase SurE from Campylobacter lari (strain RM2100 / D67 / ATCC BAA-1060).